A 377-amino-acid chain; its full sequence is MTTQFSVAGIELELFRYPASQESNLQAWDAADEHLINTLVEGGQTAVPTAIINDSFGALSCALSRLNPDWPLNVETDARTSFLGAEQNHHRNQLPMDNLTRFTSRDALPCDLALVLMKLPKNLTYFAHQLMRLSQVLPAGCKVLVGAKAKSINASLLEVFATHLGPASASLAWKKTRVITCISDGKPRALPKEVTWDIPEFNLHISNLSNVFAANKLDIGARIMLDNLPQGDFKTIVDLGCGNGVLGLRAAQLYPNADIHFIDDSEMAVASAKANWANNQLPAEKGHFHWDDCMTHLPDGVEPDLVLCNPPFHQGEAITDHIAWQMFLDARRRLKNGGILHIVGNRHLAYHVKLQRLFKNCTTVASNGKFVILQAQK.

Belongs to the methyltransferase superfamily. RlmG family.

The protein resides in the cytoplasm. It catalyses the reaction guanosine(1835) in 23S rRNA + S-adenosyl-L-methionine = N(2)-methylguanosine(1835) in 23S rRNA + S-adenosyl-L-homocysteine + H(+). Specifically methylates the guanine in position 1835 (m2G1835) of 23S rRNA. This Shewanella sp. (strain ANA-3) protein is Ribosomal RNA large subunit methyltransferase G.